The sequence spans 633 residues: Opioid growth factor receptor (633 aa).

Met1 carries the post-translational modification N-acetylmethionine. Residues 1–38 show a composition bias toward acidic residues; it reads MDDPECDSTWEDESEEDGEDGQADDTTDEDTGDDDGDA. The disordered stretch occupies residues 1 to 44; sequence MDDPECDSTWEDESEEDGEDGQADDTTDEDTGDDDGDAEEARPS. The Bipartite nuclear localization signal motif lies at 257–286; sequence RRELVHFAWEHFKPRREFVWGPRDKLRRFR. Residues 287-390 form a disordered region; the sequence is PQTISRPLMG…EPDPQGVSEV (104 aa). Phosphoserine is present on residues Ser327, Ser340, Ser361, Ser365, Ser403, and Ser452. Basic and acidic residues predominate over residues 351 to 374; the sequence is GDQRHEAKSPSPKESKKRKLEGNR. Positions 404-633 are disordered; it reads PTSQEPREAE…IEASVEPPKP (230 aa). A compositionally biased stretch (polar residues) spans 441–455; the sequence is ASNTQVQASALSPTP. Repeat copies occupy residues 467–475, 476–484, 485–493, 494–502, 503–511, 512–520, 521–529, 530–538, 539–547, 548–556, 557–565, 566–574, 575–583, and 584–592. The 14 X approximate tandem repeats stretch occupies residues 467 to 592; the sequence is GPEDPKSQVG…VGPEDPQSQV (126 aa). Basic and acidic residues predominate over residues 505-517; that stretch reads EDPKGQVEPEDPK. The span at 550 to 580 shows a compositional bias: basic and acidic residues; it reads EDPKSQVEPEDPKSQVEPEDPKSQVEPEDPK. Ser601 and Ser608 each carry phosphoserine.

This sequence belongs to the opioid growth factor receptor family. As to expression, expressed in all tissues examined, including brain, heart, lung, liver, kidney and skeletal muscle.

It localises to the cytoplasm. It is found in the nucleus. Receptor for opioid growth factor (OGF), also known as Met-enkephalin. Seems to be involved in growth regulation. In Mus musculus (Mouse), this protein is Opioid growth factor receptor (Ogfr).